Here is a 269-residue protein sequence, read N- to C-terminus: 2-heptyl-3-hydroxy-4(1H)-quinolone dioxygenase (269 aa).

His97 is a binding site for substrate. Catalysis depends on His246, which acts as the Proton donor/acceptor.

This sequence belongs to the AB hydrolase superfamily. Monomer.

It catalyses the reaction 2-heptyl-3-hydroxy-4(1H)-quinolone + O2 = N-octanoylanthranilate + CO + H(+). Its function is as follows. Ring-cleaving dioxygenase involved in the degradation pathway of the Pseudomonas aeruginosa quorum sensing signal molecules HHQ (2-heptyl-4-quinolone) and PQS (2-heptyl-3-hydroxy-4(1H)-quinolone) to anthranilate. Catalyzes the cleavage of PQS to form N-octanoylanthranilate and carbon monoxide. Thus, leads to the inactivation of PQS that plays a central role in the regulation of virulence factor production by P.aeruginosa, thereby quenching the production of antimicrobials, which may contribute to the competitiveness of M.abscessus in presence of P.aeruginosa. In vitro, can also use other 2-alkyl-3-hydroxy-4(1H)-quinolone (AHQ) substrates with shorter alkyl substituents at C2, but with lower efficiency. This is 2-heptyl-3-hydroxy-4(1H)-quinolone dioxygenase from Mycobacteroides abscessus (strain ATCC 19977 / DSM 44196 / CCUG 20993 / CIP 104536 / JCM 13569 / NCTC 13031 / TMC 1543 / L948) (Mycobacterium abscessus).